Consider the following 287-residue polypeptide: Tetraspanning orphan receptor (287 aa).

Residues 1–27 are Extracellular-facing; that stretch reads MSPSLVSDTQKHERGSHGVKIKHFSPY. Residues 28–48 traverse the membrane as a helical segment; it reads IAVCVTTFSLAFCCFMVHGAI. Residues 49–55 are Cytoplasmic-facing; sequence TRQPTHL. Residues 56 to 76 traverse the membrane as a helical segment; it reads LPFFFIQVFDLIICLIHILGF. Topologically, residues 77 to 91 are extracellular; that stretch reads MSSTSDIRLVIHTKT. The helical transmembrane segment at 92 to 114 threads the bilayer; it reads GPIYIKSTGLTFIILSISRMMLA. The Cytoplasmic portion of the chain corresponds to 115–287; it reads FKAYCLGMVW…NASSNAHSSC (173 aa). A disordered region spans residues 165–190; the sequence is NNSIGNSGSPNEPNTRPRPDTITYDP.

As to quaternary structure, interacts (via N-terminal extracellular domain) with human C2a.

It localises to the cell membrane. Functionally, cell surface receptor that binds to human complement C2a protein. This results in inhibition of the classical and lectin pathways of complement activation, probably due to interference with binding of C2a to C4b and interference with cleavage by C1 or MASP2 such that C3 convertase cannot be formed. This infers resistance to complement-mediated cell lysis, allowing parasite survival and infection. The protein is Tetraspanning orphan receptor of Trypanosoma cruzi.